A 148-amino-acid chain; its full sequence is Caltractin (148 aa).

EF-hand domains are found at residues Glu-4–Glu-39, Pro-40–Glu-75, Asp-77–Asn-112, and Met-113–Phe-148. 10 residues coordinate Ca(2+): Asp-17, Asp-19, Ser-21, Thr-23, Glu-28, Asp-53, Asp-55, Ser-57, Thr-59, and Glu-64. Positions 126, 128, 130, 132, and 137 each coordinate Ca(2+).

It belongs to the centrin family. In terms of tissue distribution, ubiquitous.

In terms of biological role, this calcium-binding protein is found in the basal body complexes (the functional homolog of the centrosome in animal cell). In mitotic cells it is specifically associated with the poles of the mitotic spindles at the sites of the duplicated basal body complexes. In Tetraselmis striata (Green microalga), this protein is Caltractin.